A 598-amino-acid polypeptide reads, in one-letter code: uncharacterized protein (598 aa).

Position 46 is a phosphoserine (Ser-46). One can recognise an SAC domain in the interval 106 to 441 (LQNHLKTGPF…ADYISLSYSG (336 aa)). 2 helical membrane-spanning segments follow: residues 508–528 (TIRCVPYILLACLILFFMTLF) and 535–555 (ILPPSILLILTFLGIVASLYY).

The protein resides in the endoplasmic reticulum membrane. This is an uncharacterized protein from Schizosaccharomyces pombe (strain 972 / ATCC 24843) (Fission yeast).